The primary structure comprises 312 residues: MIEFEKPKITKFDESENYGKFVVEPLERGYGTTLGNSLRRVLLSSLPGAAVTSIQIEGVQHEFATIPGVREDVIQIVLAVKGIAIKSYVESEKQIELDVTGPMDVTAGDILTDSDIEIVNKDHYLFSIAEGHSMRAVMTVKKGYGYVPADENKVDGAPIGTIAVDSIYTPVSKVNYQVEPARVGGDSSYDKLTLEITTNGTIVSDEALSLSAKILTDHLNLFVDLSEVAAEAETLVVKDEVKTERVLDKIIEEMDFSVRTYNGLKRAGINTVADIVEMSEADMIKVKNLGHKSVEEVKVKLTELGLSLKKRK.

The interval 1 to 226 (MIEFEKPKIT…DHLNLFVDLS (226 aa)) is alpha N-terminal domain (alpha-NTD). The interval 243 to 312 (TERVLDKIIE…ELGLSLKKRK (70 aa)) is alpha C-terminal domain (alpha-CTD).

It belongs to the RNA polymerase alpha chain family. In terms of assembly, homodimer. The RNAP catalytic core consists of 2 alpha, 1 beta, 1 beta' and 1 omega subunit. When a sigma factor is associated with the core the holoenzyme is formed, which can initiate transcription.

The catalysed reaction is RNA(n) + a ribonucleoside 5'-triphosphate = RNA(n+1) + diphosphate. Functionally, DNA-dependent RNA polymerase catalyzes the transcription of DNA into RNA using the four ribonucleoside triphosphates as substrates. The polypeptide is DNA-directed RNA polymerase subunit alpha (Lactococcus lactis subsp. cremoris (strain MG1363)).